The chain runs to 201 residues: Nucleoside triphosphate pyrophosphatase (201 aa).

Aspartate 77 functions as the Proton acceptor in the catalytic mechanism.

The protein belongs to the Maf family. A divalent metal cation is required as a cofactor.

It is found in the cytoplasm. It carries out the reaction a ribonucleoside 5'-triphosphate + H2O = a ribonucleoside 5'-phosphate + diphosphate + H(+). The enzyme catalyses a 2'-deoxyribonucleoside 5'-triphosphate + H2O = a 2'-deoxyribonucleoside 5'-phosphate + diphosphate + H(+). Functionally, nucleoside triphosphate pyrophosphatase. May have a dual role in cell division arrest and in preventing the incorporation of modified nucleotides into cellular nucleic acids. This chain is Nucleoside triphosphate pyrophosphatase, found in Rickettsia akari (strain Hartford).